The following is an 891-amino-acid chain: MLPKNYDPNEIEPKWQKYWLEEKIYKYRLDENKPSYAIDTPPPFTSGTLHLGHVLSHTWIDIIARYKRMRGYNVLFPQGFDNHGLPTELKVEKEFGITKDQPEEFLKKCVEWTWQAIEAMRKQFIRIGYSADWDLEYHTMDDWYKAAVQRSLLEFYKKGLIYREEHPVYWCPKCRTSLAKAEVGYVEEEGYLYYIKLPLADGSGYIPIATTRPELMPACVAVFVHPDDERYKHLVGKKVKLPIFEREVPILADEDVDPNFGTGAVYNCTYGDEQDIVWQKRYNLPVIIVINEDGTMNENAGPYAGLKIEEARKKIAEDLEKMGLLYKKEKIKHRVLRHTERSSCMAPIELLPKKQWFIKVKDLIDEIIKVAKEINWYPEDMFLRLKDWAESMDWDWVISRQRVFGTPFPFWVCKNGHIIPAREEDLPVDPRFDKPPVDKCPVCGAEIEPVTDVLDCWVDSSITPLIITKWHEAIKGDEEAKKWFEHNFPTALRPQGTDIIRTWAFYTILRTYVLTGKKPWKDIVINGMVAGPDGRKMSKSYGNVVSPEEVIPKYGADALRLWTALAPPGEDHPFKWETVDYNYRFLQKVWNIYRFAERHIKDFDYEKYRDVELEPLDKWILSRLHRIIKFATEELERYRFNLITRELITFIWHEVADDYIEMIKYRLYGEDEESKLKAKVALYELLYNVMLLLAPFVPHITEEIYHAIFKEKIGEKSVHLLSWPEYREDRIDEEAEKIGELARKIVSEMRKYKNSHGLPLNAKLKHVAIYALDSYERLKLIERDIAGTMNIERLEIVKGEPHLEERIVEVKPNYKNIGPKYGKLVPRIVQYLRENAESIVREIKEKGKAEFEVEGKKVELTKEDITVRKEVFSEGEKVETSVVDDVVIVFF.

Positions 43–53 (PFTSGTLHLGH) match the 'HIGH' region motif. The short motif at 536–540 (KMSKS) is the 'KMSKS' region element. Residue Lys539 participates in ATP binding.

This sequence belongs to the class-I aminoacyl-tRNA synthetase family. ValS type 2 subfamily.

The protein resides in the cytoplasm. It catalyses the reaction tRNA(Val) + L-valine + ATP = L-valyl-tRNA(Val) + AMP + diphosphate. Its function is as follows. Catalyzes the attachment of valine to tRNA(Val). As ValRS can inadvertently accommodate and process structurally similar amino acids such as threonine, to avoid such errors, it has a 'posttransfer' editing activity that hydrolyzes mischarged Thr-tRNA(Val) in a tRNA-dependent manner. This chain is Valine--tRNA ligase, found in Pyrococcus horikoshii (strain ATCC 700860 / DSM 12428 / JCM 9974 / NBRC 100139 / OT-3).